Here is a 174-residue protein sequence, read N- to C-terminus: Ribulose bisphosphate carboxylase small subunit, chloroplastic (174 aa).

Residues 1-45 (MAPTVMASSATSVAPFQGLKSTAGLPVSRRSNASSASVSNGGRIR) constitute a chloroplast transit peptide.

This sequence belongs to the RuBisCO small chain family. In terms of assembly, heterohexadecamer of 8 large and 8 small subunits.

The protein localises to the plastid. It is found in the chloroplast. Its function is as follows. RuBisCO catalyzes two reactions: the carboxylation of D-ribulose 1,5-bisphosphate, the primary event in carbon dioxide fixation, as well as the oxidative fragmentation of the pentose substrate. Both reactions occur simultaneously and in competition at the same active site. Although the small subunit is not catalytic it is essential for maximal activity. The protein is Ribulose bisphosphate carboxylase small subunit, chloroplastic of Hordeum vulgare (Barley).